The primary structure comprises 428 residues: Bifunctional IPC transferase and DIPP synthase (428 aa).

The mobA-like NTP transferase stretch occupies residues 2-227 (VETAVILAGG…KAKKYLVKTA (226 aa)). CTP contacts are provided by residues 8-10 (LAG), Lys-25, Glu-80, and Glu-116. Glu-116 contacts Mg(2+). Positions 228 to 425 (IKGVGDGFIS…LTIYLVWKKK (198 aa)) are CDP-alcohol phosphatidyltransferases. A run of 3 helical transmembrane segments spans residues 266–286 (FLLG…GGIL), 336–356 (PSWD…MVSY), and 389–409 (MIMI…LAII).

The protein in the N-terminal section; belongs to the MobA family. It in the C-terminal section; belongs to the CDP-alcohol phosphatidyltransferase class-I family. Mg(2+) is required as a cofactor.

It localises to the membrane. The enzyme catalyses 1D-myo-inositol 3-phosphate + CTP + H(+) = CDP-1L-myo-inositol + diphosphate. It carries out the reaction CDP-1L-myo-inositol + 1D-myo-inositol 3-phosphate = bis(1L-myo-inositol) 3,1'-phosphate 1-phosphate + CMP + H(+). Involved in biosynthesis of di-myo-inositol phosphate (DIP), a widespread organic solute in microorganisms adapted to hot environments. Catalyzes the condensation of CTP and L-myo-inositol-1-phosphate into CDP-L-myo-inositol, as well as the biosynthesis of di-myo-inositol-1,3'-phosphate-1'-phosphate (DIPP) from CDP-L-myo-inositol and L-myo-inositol-1-phosphate. The polypeptide is Bifunctional IPC transferase and DIPP synthase (spsI) (Aquifex aeolicus (strain VF5)).